A 249-amino-acid polypeptide reads, in one-letter code: Phosphomannomutase 2 (249 aa).

Asp-12 acts as the Nucleophile in catalysis. Mg(2+) is bound by residues Asp-12 and Asp-14. The Proton donor/acceptor role is filled by Asp-14. 6 residues coordinate alpha-D-mannose 1-phosphate: Arg-21, Arg-123, Arg-134, Arg-141, Ser-179, and Asp-181. Asp-209 lines the Mg(2+) pocket.

This sequence belongs to the eukaryotic PMM family. As to quaternary structure, homodimer.

The protein localises to the cytoplasm. The catalysed reaction is alpha-D-mannose 1-phosphate = D-mannose 6-phosphate. It participates in nucleotide-sugar biosynthesis; GDP-alpha-D-mannose biosynthesis; alpha-D-mannose 1-phosphate from D-fructose 6-phosphate: step 2/2. Functionally, involved in the synthesis of the GDP-mannose and dolichol-phosphate-mannose required for a number of critical mannosyl transfer reactions. This chain is Phosphomannomutase 2 (pmmB), found in Dictyostelium discoideum (Social amoeba).